A 93-amino-acid polypeptide reads, in one-letter code: Secretoglobin family 3A member 2 (93 aa).

Positions 1–21 (MKLVTIFLLVTISLCSYSATA) are cleaved as a signal peptide.

This sequence belongs to the secretoglobin family. UGRP subfamily. As to quaternary structure, homodimer; disulfide-linked. Monomer. Interacts with APOA1. As to expression, highly expressed in lung and trachea. Detected throughout the airway epithelium in lung, with slightly higher expression in large airways. Found in lung submucosal gland acinus where it localizes to serous-like cells. Probably expressed in club cells of the bronchioles. Not detected in other tissues tested.

The protein resides in the secreted. Its function is as follows. Secreted cytokine-like protein. Binds to the scavenger receptor MARCO. Can also bind to pathogens including the Gram-positive bacterium L.monocytogenes, the Gram-negative bacterium P.aeruginosa, and yeast. Strongly inhibits phospholipase A2 (PLA2G1B) activity. Seems to have anti-inflammatory effects in respiratory epithelium. Also has anti-fibrotic activity in lung. May play a role in fetal lung development and maturation. Promotes branching morphogenesis during early stages of lung development. In the pituitary, may inhibit production of follicle-stimulating hormone (FSH) and luteinizing hormone (LH). In Homo sapiens (Human), this protein is Secretoglobin family 3A member 2 (SCGB3A2).